We begin with the raw amino-acid sequence, 160 residues long: SsrA-binding protein (160 aa).

Residues 137 to 153 show a composition bias toward basic and acidic residues; the sequence is DKRDDIKTREWKQDKAR. The disordered stretch occupies residues 137-160; that stretch reads DKRDDIKTREWKQDKARIMKNANR.

The protein belongs to the SmpB family.

The protein resides in the cytoplasm. Functionally, required for rescue of stalled ribosomes mediated by trans-translation. Binds to transfer-messenger RNA (tmRNA), required for stable association of tmRNA with ribosomes. tmRNA and SmpB together mimic tRNA shape, replacing the anticodon stem-loop with SmpB. tmRNA is encoded by the ssrA gene; the 2 termini fold to resemble tRNA(Ala) and it encodes a 'tag peptide', a short internal open reading frame. During trans-translation Ala-aminoacylated tmRNA acts like a tRNA, entering the A-site of stalled ribosomes, displacing the stalled mRNA. The ribosome then switches to translate the ORF on the tmRNA; the nascent peptide is terminated with the 'tag peptide' encoded by the tmRNA and targeted for degradation. The ribosome is freed to recommence translation, which seems to be the essential function of trans-translation. The protein is SsrA-binding protein of Edwardsiella ictaluri (strain 93-146).